A 275-amino-acid chain; its full sequence is Orotidine 5'-phosphate decarboxylase (275 aa).

Lys101 serves as the catalytic Proton donor.

The protein belongs to the OMP decarboxylase family. Type 2 subfamily.

It catalyses the reaction orotidine 5'-phosphate + H(+) = UMP + CO2. Its pathway is pyrimidine metabolism; UMP biosynthesis via de novo pathway; UMP from orotate: step 2/2. The sequence is that of Orotidine 5'-phosphate decarboxylase from Leptospira interrogans serogroup Icterohaemorrhagiae serovar Lai (strain 56601).